The chain runs to 729 residues: Transketolase (729 aa).

Residue His97 participates in substrate binding. Thiamine diphosphate contacts are provided by residues His138 and 186–188 (GPL). A Mg(2+)-binding site is contributed by Asp227. Positions 228 and 257 each coordinate thiamine diphosphate. The Mg(2+) site is built by Asn257 and Ile259. The substrate site is built by His332, Arg423, and Ser450. His332 is a binding site for thiamine diphosphate. The active-site Proton donor is the Glu477. Residue Phe503 coordinates thiamine diphosphate. His527, Asp535, and Arg586 together coordinate substrate.

The protein belongs to the transketolase family. In terms of assembly, homodimer. It depends on Mg(2+) as a cofactor. The cofactor is Ca(2+). Mn(2+) serves as cofactor. Requires Co(2+) as cofactor. Thiamine diphosphate is required as a cofactor.

The enzyme catalyses D-sedoheptulose 7-phosphate + D-glyceraldehyde 3-phosphate = aldehydo-D-ribose 5-phosphate + D-xylulose 5-phosphate. Its function is as follows. Catalyzes the transfer of a two-carbon ketol group from a ketose donor to an aldose acceptor, via a covalent intermediate with the cofactor thiamine pyrophosphate. The chain is Transketolase (tkt) from Streptococcus pyogenes serotype M18 (strain MGAS8232).